A 492-amino-acid polypeptide reads, in one-letter code: Bifunctional purine biosynthesis protein PurH (492 aa).

Residues 1-144 (MKKAILSVSN…KNFKHVTTIV (144 aa)) form the MGS-like domain.

Belongs to the PurH family.

It catalyses the reaction (6R)-10-formyltetrahydrofolate + 5-amino-1-(5-phospho-beta-D-ribosyl)imidazole-4-carboxamide = 5-formamido-1-(5-phospho-D-ribosyl)imidazole-4-carboxamide + (6S)-5,6,7,8-tetrahydrofolate. The catalysed reaction is IMP + H2O = 5-formamido-1-(5-phospho-D-ribosyl)imidazole-4-carboxamide. It participates in purine metabolism; IMP biosynthesis via de novo pathway; 5-formamido-1-(5-phospho-D-ribosyl)imidazole-4-carboxamide from 5-amino-1-(5-phospho-D-ribosyl)imidazole-4-carboxamide (10-formyl THF route): step 1/1. The protein operates within purine metabolism; IMP biosynthesis via de novo pathway; IMP from 5-formamido-1-(5-phospho-D-ribosyl)imidazole-4-carboxamide: step 1/1. The chain is Bifunctional purine biosynthesis protein PurH from Staphylococcus haemolyticus (strain JCSC1435).